The following is a 132-amino-acid chain: Small ribosomal subunit protein uS8 (132 aa).

It belongs to the universal ribosomal protein uS8 family. Part of the 30S ribosomal subunit. Contacts proteins S5 and S12.

One of the primary rRNA binding proteins, it binds directly to 16S rRNA central domain where it helps coordinate assembly of the platform of the 30S subunit. This Stenotrophomonas maltophilia (strain R551-3) protein is Small ribosomal subunit protein uS8.